Reading from the N-terminus, the 154-residue chain is MAARLYCQLDSSRNVLCLRPVGAESCGRPLSGPVGTLSSPSPSAVPTDHGAHLSLRGLPVCAFSSAGPCALRFTSARCMETTVNAHQILPKVLYKRTLGLPAMSTTDLEAYFKDCVFKDWEELGEEIRLKIFVLGGCRHKLVCAPFSCNFFTSA.

The tract at residues 68-117 (PCALRFTSARCMETTVNAHQILPKVLYKRTLGLPAMSTTDLEAYFKDCVF) is mitochondrial targeting sequence.

The protein belongs to the orthohepadnavirus protein X family. As to quaternary structure, may form homodimer. May interact with host CEBPA, CFLAR, CREB1, DDB1, E4F1, HBXIP, HSPD1/HSP60, NFKBIA, POLR2E and SMAD4. Interacts with host SMC5-SMC6 complex and induces its degradation. Interacts with host TRPC4AP; leading to prevent ubiquitination of TRPC4AP. Interacts with host PLSCR1; this interaction promotes ubiquitination and degradation of HBx and impairs HBx-mediated cell proliferation. In terms of processing, a fraction may be phosphorylated in insect cells and HepG2 cells, a human hepatoblastoma cell line. Phosphorylated in vitro by host protein kinase C or mitogen-activated protein kinase. N-acetylated in insect cells.

The protein resides in the host cytoplasm. The protein localises to the host nucleus. It localises to the host mitochondrion. In terms of biological role, multifunctional protein that plays a role in silencing host antiviral defenses and promoting viral transcription. Does not seem to be essential for HBV infection. May be directly involved in development of cirrhosis and liver cancer (hepatocellular carcinoma). Most of cytosolic activities involve modulation of cytosolic calcium. The effect on apoptosis is controversial depending on the cell types in which the studies have been conducted. May induce apoptosis by localizing in mitochondria and causing loss of mitochondrial membrane potential. May also modulate apoptosis by binding host CFLAR, a key regulator of the death-inducing signaling complex (DISC). Promotes viral transcription by using the host E3 ubiquitin ligase DDB1 to target the SMC5-SMC6 complex to proteasomal degradation. This host complex would otherwise bind to viral episomal DNA, and prevents its transcription. Moderately stimulates transcription of many different viral and cellular transcription elements. Promoters and enhancers stimulated by HBx contain DNA binding sites for NF-kappa-B, AP-1, AP-2, c-EBP, ATF/CREB, or the calcium-activated factor NF-AT. This chain is Protein X, found in Homo sapiens (Human).